We begin with the raw amino-acid sequence, 184 residues long: dCTP deaminase (184 aa).

107-112 provides a ligand contact to dCTP; it reads KSTYAR. Catalysis depends on glutamate 133, which acts as the Proton donor/acceptor. Positions 152, 166, and 176 each coordinate dCTP.

The protein belongs to the dCTP deaminase family. As to quaternary structure, homotrimer.

The enzyme catalyses dCTP + H2O + H(+) = dUTP + NH4(+). It functions in the pathway pyrimidine metabolism; dUMP biosynthesis; dUMP from dCTP (dUTP route): step 1/2. Its function is as follows. Catalyzes the deamination of dCTP to dUTP. The polypeptide is dCTP deaminase (Granulibacter bethesdensis (strain ATCC BAA-1260 / CGDNIH1)).